Here is a 248-residue protein sequence, read N- to C-terminus: Gas vesicle protein J (248 aa).

A 1; truncated repeat occupies 121-140; it reads DVKDDLYQTSAKIPSPVDTP. The interval 121–245 is 6 X 21 AA approximate tandem repeats; that stretch reads DVKDDLYQTS…EEIPSSVDPA (125 aa). 5 tandem repeats follow at residues 141 to 161, 162 to 182, 183 to 203, 204 to 224, and 225 to 245.

Belongs to the gas vesicle GvpA family. Interacts with GvpA.

Its subcellular location is the gas vesicle. Its function is as follows. A minor component of the gas vesicle, might be involved in nucleating gas vesicle formation. Gas vesicles (GV) are hollow, gas filled proteinaceous nanostructures. During planktonic growth they allow positioning of the organism at a favorable depth for light or nutrient acquisition. This Dolichospermum flosaquae (Anabaena flos-aquae) protein is Gas vesicle protein J.